The sequence spans 474 residues: Vitamin D-binding protein (474 aa).

Residues 1 to 16 (MKRVLVLLLAVAFGHA) form the signal peptide. Albumin domains lie at 17–208 (LERG…QLKH), 209–394 (LSLL…LLKK), and 395–474 (ELSS…KNIL). Intrachain disulfides connect Cys29/Cys75, Cys74/Cys83, Cys96/Cys112, Cys111/Cys122, Cys145/Cys190, Cys189/Cys198, Cys220/Cys266, Cys265/Cys273, Cys286/Cys300, Cys299/Cys311, Cys335/Cys376, Cys375/Cys384, Cys407/Cys453, and Cys452/Cys462.

It belongs to the ALB/AFP/VDB family. In terms of assembly, associates with membrane-bound immunoglobulin on the surface of B-lymphocytes and with IgG Fc receptor on the membranes of T-lymphocytes. Interacts with LRP2; the interaction is required for renal uptake of GC in complex with 25-hydroxyvitamin D3. Allele GC*1S is O-glycosylated at Thr-436. The trisaccharide sugar moiety can be modified by the successive removal of neuraminic acid and galactose leaving an O-mceeN-acetyl-galactosamine. This conversion is thought to produce a macrophage-activating factor (Gc-MAF). Only a minor proportion of plasma GC is O-glycosylated. The potential N-glycosylation site predicted at Asn-288 is thought to be nonglycosylated. Expressed in the liver. Found in plasma, ascites, cerebrospinal fluid and urine.

Its subcellular location is the secreted. In terms of biological role, involved in vitamin D transport and storage, scavenging of extracellular G-actin, enhancement of the chemotactic activity of C5 alpha for neutrophils in inflammation and macrophage activation. This is Vitamin D-binding protein (GC) from Homo sapiens (Human).